The chain runs to 203 residues: CASP-like protein 2U6 (203 aa).

At 1-31 (MSEHRIPVAADKKISPPISAGEQKGCKGLKR) the chain is on the cytoplasmic side. Residues 32-52 (TDLMLRFAAFVCCTVTMVVLI) form a helical membrane-spanning segment. Residues 53–84 (TDKQTSAIQVPGFNNLTITKTVSFDLAKAFVY) are Extracellular-facing. The N-linked (GlcNAc...) asparagine glycan is linked to Asn67. A helical membrane pass occupies residues 85-105 (LVSAAGIGAGYTLLVLVLSII). At 106-111 (SAERSK) the chain is on the cytoplasmic side. A helical membrane pass occupies residues 112 to 132 (AIAWFIFVFDQLITYVLLAAA). Over 133–164 (AASTEVAYMGAHAPPEASWLKVCSLFGRFCHQ) the chain is Extracellular. Residues 165–185 (LGASLVTSLISTVLFAFSAAI) form a helical membrane-spanning segment. Residues 186 to 203 (SAYYLFSNTNVRPAYSKG) lie on the Cytoplasmic side of the membrane.

This sequence belongs to the Casparian strip membrane proteins (CASP) family. In terms of assembly, homodimer and heterodimers.

The protein resides in the cell membrane. The sequence is that of CASP-like protein 2U6 from Selaginella moellendorffii (Spikemoss).